Reading from the N-terminus, the 302-residue chain is Probable alpha-L-glutamate ligase (302 aa).

Positions 112–294 (LQLLLKTGVP…IAAEIIDYIE (183 aa)) constitute an ATP-grasp domain. ATP is bound by residues Lys148, 185-186 (DF), Asp194, and 218-220 (RAN). Residues Asp255, Glu267, and Asn269 each contribute to the Mg(2+) site. Mn(2+)-binding residues include Asp255, Glu267, and Asn269.

The protein belongs to the RimK family. Mg(2+) serves as cofactor. The cofactor is Mn(2+).

The chain is Probable alpha-L-glutamate ligase from Haemophilus influenzae (strain 86-028NP).